The chain runs to 120 residues: Large ribosomal subunit protein eL8 (120 aa).

This sequence belongs to the eukaryotic ribosomal protein eL8 family. In terms of assembly, part of the 50S ribosomal subunit. Probably part of the RNase P complex.

Its subcellular location is the cytoplasm. Multifunctional RNA-binding protein that recognizes the K-turn motif in ribosomal RNA, the RNA component of RNase P, box H/ACA, box C/D and box C'/D' sRNAs. This is Large ribosomal subunit protein eL8 from Methanosarcina acetivorans (strain ATCC 35395 / DSM 2834 / JCM 12185 / C2A).